Reading from the N-terminus, the 65-residue chain is Large ribosomal subunit protein bL35 (65 aa).

Residues 1–29 (MPKMKTNRGAAKRFKKTGSGRIKRGKAFT) form a disordered region. Residues 10-26 (AAKRFKKTGSGRIKRGK) are compositionally biased toward basic residues.

This sequence belongs to the bacterial ribosomal protein bL35 family.

The chain is Large ribosomal subunit protein bL35 from Desulfotalea psychrophila (strain LSv54 / DSM 12343).